The primary structure comprises 157 residues: Transcriptional repressor NrdR (157 aa).

The tract at residues 1–24 is disordered; sequence MRCPKCGGNKSSVVDSRQAEDGNT. Residues 3–34 fold into a zinc finger; it reads CPKCGGNKSSVVDSRQAEDGNTIRRRRECEEC. The ATP-cone domain occupies 49-139; that stretch reads LVVVKKDGTR…VYRSFKDVGE (91 aa).

It belongs to the NrdR family. Zn(2+) is required as a cofactor.

Functionally, negatively regulates transcription of bacterial ribonucleotide reductase nrd genes and operons by binding to NrdR-boxes. The chain is Transcriptional repressor NrdR from Streptococcus sanguinis (strain SK36).